Consider the following 445-residue polypeptide: Phosphoglucosamine mutase (445 aa).

Ser-102 acts as the Phosphoserine intermediate in catalysis. Residues Ser-102, Asp-241, Asp-243, and Asp-245 each coordinate Mg(2+). Residue Ser-102 is modified to Phosphoserine.

Belongs to the phosphohexose mutase family. Mg(2+) is required as a cofactor. In terms of processing, activated by phosphorylation.

The enzyme catalyses alpha-D-glucosamine 1-phosphate = D-glucosamine 6-phosphate. Catalyzes the conversion of glucosamine-6-phosphate to glucosamine-1-phosphate. The protein is Phosphoglucosamine mutase of Shewanella pealeana (strain ATCC 700345 / ANG-SQ1).